The following is a 638-amino-acid chain: Phosphomethylpyrimidine synthase (638 aa).

Substrate is bound by residues N243, M272, Y301, H337, 357-359 (SRG), 398-401 (DGLR), and E437. H441 contributes to the Zn(2+) binding site. Y464 is a substrate binding site. H505 is a binding site for Zn(2+). C585, C588, and C593 together coordinate [4Fe-4S] cluster.

Belongs to the ThiC family. In terms of assembly, homodimer. [4Fe-4S] cluster serves as cofactor.

The catalysed reaction is 5-amino-1-(5-phospho-beta-D-ribosyl)imidazole + S-adenosyl-L-methionine = 4-amino-2-methyl-5-(phosphooxymethyl)pyrimidine + CO + 5'-deoxyadenosine + formate + L-methionine + 3 H(+). It participates in cofactor biosynthesis; thiamine diphosphate biosynthesis. Catalyzes the synthesis of the hydroxymethylpyrimidine phosphate (HMP-P) moiety of thiamine from aminoimidazole ribotide (AIR) in a radical S-adenosyl-L-methionine (SAM)-dependent reaction. In Azoarcus sp. (strain BH72), this protein is Phosphomethylpyrimidine synthase.